We begin with the raw amino-acid sequence, 84 residues long: MAYLKIVLVALMLVLAVSAMRRPDQQDQDISVAKRVACKCDDDGPDIRSATLTGTVDLGSCDEGWEKCASYYTVIADCCRRPRS.

The signal sequence occupies residues 1–19 (MAYLKIVLVALMLVLAVSA). Residues 20–33 (MRRPDQQDQDISVA) constitute a propeptide that is removed on maturation. 3 disulfide bridges follow: cysteine 38-cysteine 78, cysteine 40-cysteine 68, and cysteine 61-cysteine 79.

It belongs to the sea anemone sodium channel inhibitory toxin family. Type II subfamily.

The protein resides in the secreted. It localises to the nematocyst. In terms of biological role, binds specifically to the voltage-gated sodium channel (Nav) and delays its inactivation. The polypeptide is Delta-thalatoxin-Tas1a (Thalassianthus aster (Fuzzy-tipped anemone)).